The primary structure comprises 440 residues: Methylenetetrahydrofolate--tRNA-(uracil-5-)-methyltransferase TrmFO (440 aa).

Residue 14-19 (GAGLAG) coordinates FAD.

Belongs to the MnmG family. TrmFO subfamily. FAD serves as cofactor.

Its subcellular location is the cytoplasm. It catalyses the reaction uridine(54) in tRNA + (6R)-5,10-methylene-5,6,7,8-tetrahydrofolate + NADH + H(+) = 5-methyluridine(54) in tRNA + (6S)-5,6,7,8-tetrahydrofolate + NAD(+). The catalysed reaction is uridine(54) in tRNA + (6R)-5,10-methylene-5,6,7,8-tetrahydrofolate + NADPH + H(+) = 5-methyluridine(54) in tRNA + (6S)-5,6,7,8-tetrahydrofolate + NADP(+). Catalyzes the folate-dependent formation of 5-methyl-uridine at position 54 (M-5-U54) in all tRNAs. The polypeptide is Methylenetetrahydrofolate--tRNA-(uracil-5-)-methyltransferase TrmFO (Bdellovibrio bacteriovorus (strain ATCC 15356 / DSM 50701 / NCIMB 9529 / HD100)).